The primary structure comprises 33 residues: Cytochrome b6-f complex subunit 8 (33 aa).

The chain crosses the membrane as a helical span at residues 2–22 (LITLGWASLAALFSFSIAMVV).

This sequence belongs to the PetN family. In terms of assembly, the 4 large subunits of the cytochrome b6-f complex are cytochrome b6, subunit IV (17 kDa polypeptide, PetD), cytochrome f and the Rieske protein, while the 4 small subunits are PetG, PetL, PetM and PetN. The complex functions as a dimer.

Its subcellular location is the plastid. It localises to the organellar chromatophore thylakoid membrane. In terms of biological role, component of the cytochrome b6-f complex, which mediates electron transfer between photosystem II (PSII) and photosystem I (PSI), cyclic electron flow around PSI, and state transitions. In Paulinella chromatophora, this protein is Cytochrome b6-f complex subunit 8.